Reading from the N-terminus, the 232-residue chain is Small ribosomal subunit protein uS2 (232 aa).

It belongs to the universal ribosomal protein uS2 family.

The sequence is that of Small ribosomal subunit protein uS2 from Natranaerobius thermophilus (strain ATCC BAA-1301 / DSM 18059 / JW/NM-WN-LF).